The sequence spans 136 residues: ATP synthase epsilon chain (136 aa).

Residues 95–115 are disordered; sequence DFSEAQSRLEEANKGSDRREQ. Positions 101–115 are enriched in basic and acidic residues; sequence SRLEEANKGSDRREQ.

Belongs to the ATPase epsilon chain family. As to quaternary structure, F-type ATPases have 2 components, CF(1) - the catalytic core - and CF(0) - the membrane proton channel. CF(1) has five subunits: alpha(3), beta(3), gamma(1), delta(1), epsilon(1). CF(0) has three main subunits: a, b and c.

It is found in the cellular thylakoid membrane. Produces ATP from ADP in the presence of a proton gradient across the membrane. This chain is ATP synthase epsilon chain, found in Rippkaea orientalis (strain PCC 8801 / RF-1) (Cyanothece sp. (strain PCC 8801)).